Consider the following 834-residue polypeptide: Arf-GAP with coiled-coil, ANK repeat and PH domain-containing protein 3 (834 aa).

One can recognise a PH domain in the interval 268-363 (GVVMEGYLFK…WVQAVQASIA (96 aa)). Positions 375–400 (SERLDRTASPSTSSIDSATDTRERGV) are disordered. The span at 382-392 (ASPSTSSIDSA) shows a compositional bias: polar residues. The Arf-GAP domain occupies 403–525 (ESVLQRVQSV…KFLRKAPMAP (123 aa)). The C4-type zinc finger occupies 418 to 441 (CGDCGQPDPRWASINLGVLLCIEC). A disordered region spans residues 633–653 (SVTEEEGAESEESSGEADGDT). Over residues 634–653 (VTEEEGAESEESSGEADGDT) the composition is skewed to acidic residues. ANK repeat units lie at residues 702–731 (EGKT…DVNQ), 735–764 (RGRA…DQHA), and 768–797 (EQRD…AEEM).

Its function is as follows. GTPase-activating protein for the ADP ribosylation factor family. This chain is Arf-GAP with coiled-coil, ANK repeat and PH domain-containing protein 3 (ACAP3), found in Homo sapiens (Human).